A 596-amino-acid chain; its full sequence is Phosphoprotein (596 aa).

Composition is skewed to polar residues over residues 1–11, 38–66, and 74–85; these read MENNAKDNQIM, TDSQ…QLES, and ENSGSVNENRQL. 3 disordered regions span residues 1-25, 38-196, and 220-352; these read MENN…SSDI, TDSQ…ESIS, and KNTR…EEST. The segment at 33–41 is N0 binding; sequence EFILSTDSQ. A compositionally biased stretch (basic and acidic residues) spans 88-97; that stretch reads SHERATETKN. The span at 127–144 shows a compositional bias: polar residues; sequence ISRSSPDPNNGTQIQESI. 2 stretches are compositionally biased toward basic and acidic residues: residues 151 to 168 and 233 to 249; these read EMDK…KDVP and EDDK…EDTN. The segment covering 270–324 has biased composition (polar residues); sequence TLKISTTTGESTRPQSGSQGKRITSWNILNSESGSRTESTSQNSQIPTSGKSNTV. Residues 331-352 show a composition bias toward basic and acidic residues; that stretch reads LESRIKTQKTDGKEREDTEEST. A multimerization region spans residues 374 to 441; that stretch reads LDLYQDKRVV…KMDESHRRLI (68 aa). Residues 416–436 adopt a coiled-coil conformation; it reads LNQIQNEILSLKTDLKKMDES. A l protein binding region spans residues 442 to 475; it reads ENQKEQLSLITSLISNLKIMTERGGKKDQPENSG.

Belongs to the respirovirus P protein family. Homotetramer. Interacts (via multimerization domain) with polymerase L; this interaction forms the polymerase complex. Interacts (via N-terminus) with N0; this interaction allows P to chaperon N0 before encapsidation and form the N-P complex. Interacts (via C-terminus) with N-RNA template; this interaction positions the polymerase on the template.

Essential cofactor of the RNA polymerase L that plays a central role in the transcription and replication by forming the polymerase complex with RNA polymerase L and recruiting L to the genomic N-RNA template for RNA synthesis. Also plays a central role in the encapsidation of nascent RNA chains by forming the encapsidation complex with the nucleocapsid protein N (N-P complex). Acts as a chaperone for newly synthesized free N protein, so-called N0, allowing encapsidation of nascent RNA chains during replication. The nucleoprotein protein N prevents excessive phosphorylation of P, which leads to down-regulation of viral transcription/ replication. Participates, together with N, in the formation of viral factories (viroplasms), which are large inclusions in the host cytoplasm where replication takes place. Recruits host PI4KB and remodel the host endoplasmic reticulum membrane to form viral replication factories. The sequence is that of Phosphoprotein (P/V/D) from Bovine parainfluenza 3 virus (BPIV-3).